The chain runs to 305 residues: Glycerol-3-phosphate dehydrogenase [NAD(P)+] (305 aa).

The NADPH site is built by F10, R29, and K87. K87, G115, and S117 together coordinate sn-glycerol 3-phosphate. A119 contributes to the NADPH binding site. K170, D223, S233, R234, and N235 together coordinate sn-glycerol 3-phosphate. Residue K170 is the Proton acceptor of the active site. R234 serves as a coordination point for NADPH. Residue E255 participates in NADPH binding.

The protein belongs to the NAD-dependent glycerol-3-phosphate dehydrogenase family.

The protein resides in the cytoplasm. It carries out the reaction sn-glycerol 3-phosphate + NAD(+) = dihydroxyacetone phosphate + NADH + H(+). The enzyme catalyses sn-glycerol 3-phosphate + NADP(+) = dihydroxyacetone phosphate + NADPH + H(+). It participates in membrane lipid metabolism; glycerophospholipid metabolism. Functionally, catalyzes the reduction of the glycolytic intermediate dihydroxyacetone phosphate (DHAP) to sn-glycerol 3-phosphate (G3P), the key precursor for phospholipid synthesis. This Cereibacter sphaeroides (strain ATCC 17023 / DSM 158 / JCM 6121 / CCUG 31486 / LMG 2827 / NBRC 12203 / NCIMB 8253 / ATH 2.4.1.) (Rhodobacter sphaeroides) protein is Glycerol-3-phosphate dehydrogenase [NAD(P)+].